A 285-amino-acid polypeptide reads, in one-letter code: Nucleotide-binding protein Glov_2163 (285 aa).

Residue 8-15 coordinates ATP; that stretch reads GMSGSGKS. 59–62 lines the GTP pocket; it reads DIRG.

This sequence belongs to the RapZ-like family.

Its function is as follows. Displays ATPase and GTPase activities. This chain is Nucleotide-binding protein Glov_2163, found in Trichlorobacter lovleyi (strain ATCC BAA-1151 / DSM 17278 / SZ) (Geobacter lovleyi).